Consider the following 848-residue polypeptide: Crooked neck-like protein 1 (848 aa).

Thr2 carries the N-acetylalanine modification. The interval 81–106 (RSSRTPHSTRCRKEDAQPGHHGNGAA) is disordered. 17 HAT repeats span residues 222-254 (DYKL…WEES), 256-288 (KEIQ…MEMK), 290-322 (RQVN…MEEM), 324-355 (GNVA…FELR), 357-388 (KEVD…FEEK), 390-425 (AYFA…FEEN), 427-461 (KEFE…FEKK), 471-503 (IIVS…LVES), 505-539 (AEAE…LWIN), 549-585 (KDPE…FEIR), 587-618 (KNLS…LELQ), 620-652 (REFD…LETI), 654-688 (GDID…FEIE), 690-721 (EETE…FELS), 726-767 (GSLT…EFGT), 769-807 (SDKE…YIFP), and 809-834 (DAAN…EKED). The interval 411-628 (MDEHLYVAFA…LREFDRCRKL (218 aa)) is mediates interaction with HSP90. Ser503 is subject to Phosphoserine. The interval 827–848 (KQQQEKEDAEHHPDEDVDESES) is disordered. Residues 828 to 840 (QQQEKEDAEHHPD) show a composition bias toward basic and acidic residues.

This sequence belongs to the crooked-neck family. Identified in the spliceosome C complex. Present in a spliceosome complex assembled in vitro containing CRNKL1, HPRP8BP and SNRPB2. Component of the minor spliceosome, which splices U12-type introns. Isoform 2 seems to be predominant in the spliceosome complex. Interacts with PPIL2 (via the PPIase cyclophilin-type domain); they may form a trimeric complex with HSP90. In terms of tissue distribution, widely expressed. Highly expressed in testis. Not detected in brain and lung.

The protein localises to the nucleus. It is found in the nucleus speckle. Functionally, involved in pre-mRNA splicing process. As a component of the minor spliceosome, involved in the splicing of U12-type introns in pre-mRNAs. The protein is Crooked neck-like protein 1 (CRNKL1) of Homo sapiens (Human).